Consider the following 333-residue polypeptide: Ribosomal RNA small subunit methyltransferase H (333 aa).

Residues 31–33, aspartate 49, phenylalanine 76, aspartate 134, and glutamine 141 contribute to the S-adenosyl-L-methionine site; that span reads GGY.

This sequence belongs to the methyltransferase superfamily. RsmH family.

It localises to the cytoplasm. The enzyme catalyses cytidine(1402) in 16S rRNA + S-adenosyl-L-methionine = N(4)-methylcytidine(1402) in 16S rRNA + S-adenosyl-L-homocysteine + H(+). In terms of biological role, specifically methylates the N4 position of cytidine in position 1402 (C1402) of 16S rRNA. This Wolbachia sp. subsp. Brugia malayi (strain TRS) protein is Ribosomal RNA small subunit methyltransferase H.